The primary structure comprises 1328 residues: Protein turtle homolog B (1328 aa).

The first 17 residues, 1-17 (MIWYVATLIASVISTRG), serve as a signal peptide directing secretion. The Extracellular segment spans residues 18–722 (LVAQGAHGLR…DLTDDGLARP (705 aa)). 5 Ig-like domains span residues 30 to 115 (PEFV…ECKV), 139 to 226 (PTFT…LLVQ), 228 to 320 (PPFI…AYLT), 324 to 415 (PARV…ARLV), and 420 to 504 (PYFT…THLT). Cystine bridges form between Cys45/Cys113 and Cys161/Cys208. 2 N-linked (GlcNAc...) asparagine glycosylation sites follow: Asn241 and Asn258. 3 cysteine pairs are disulfide-bonded: Cys250/Cys303, Cys346/Cys397, and Cys442/Cys488. Fibronectin type-III domains lie at 512–604 (APGS…TLAF) and 614–708 (LVTP…STDI). An N-linked (GlcNAc...) asparagine glycan is attached at Asn624. Residues 723–743 (VLAGIVATICFLAAAILFSTL) traverse the membrane as a helical segment. Residues 744 to 1328 (AACFVNKQRK…EPPTTLPTSG (585 aa)) are Cytoplasmic-facing. 3 disordered regions span residues 758-817 (RKKD…EKEL), 914-1040 (PMSS…PEPW), and 1106-1328 (KSPG…PTSG). Phosphoserine is present on residues Ser775, Ser783, and Ser794. Over residues 990 to 1001 (SPLSSVMSSPPL) the composition is skewed to low complexity. Composition is skewed to polar residues over residues 1018–1033 (ENASNSTLPLTQTPTG), 1129–1141 (LVSQGQLRHTSQG), and 1199–1214 (SRLSPLTQSPLSSRTG). The residue at position 1136 (Arg1136) is an Omega-N-methylarginine. Ser1207 and Ser1215 each carry phosphoserine. Residues 1246 to 1273 (SFSRKSTPSSTGSPSQSSRSGSPSYRPT) show a composition bias toward low complexity. 2 stretches are compositionally biased toward pro residues: residues 1284 to 1295 (PSPPPGPAPPAP) and 1318 to 1328 (PEPPTTLPTSG).

Belongs to the immunoglobulin superfamily. Turtle family. Found in a complex with MAGI2 and NLGN2, where it interacts with MAGI2 (via PDZ 5 and PDZ 6 domains). In terms of processing, N-glycosylated and sialylated. Not significantly O-glycosylated. In terms of tissue distribution, detected in brain.

Its subcellular location is the cell membrane. It is found in the postsynaptic cell membrane. It localises to the postsynaptic density. Transmembrane protein which is abundantly expressed in interneurons, where it may regulate inhibitory synapse development. May mediate homophilic cell adhesion. The chain is Protein turtle homolog B from Mus musculus (Mouse).